Consider the following 150-residue polypeptide: Large ribosomal subunit protein uL13 (150 aa).

Residues 130–150 form a disordered region; that stretch reads EHPHAAQQPKTLQLDPAASAQ.

The protein belongs to the universal ribosomal protein uL13 family. Part of the 50S ribosomal subunit.

In terms of biological role, this protein is one of the early assembly proteins of the 50S ribosomal subunit, although it is not seen to bind rRNA by itself. It is important during the early stages of 50S assembly. This Synechococcus sp. (strain CC9311) protein is Large ribosomal subunit protein uL13.